A 91-amino-acid chain; its full sequence is Probable Thioredoxin (91 aa).

The Glutaredoxin domain maps to 1-91 (MVMMKLFTSP…LKGGEEYGAS (91 aa)). C12 and C15 are joined by a disulfide.

It belongs to the glutaredoxin family.

The protein localises to the cytoplasm. In terms of biological role, acts to maintain redox homeostasis; functions as a protein disulfide reductase. The polypeptide is Probable Thioredoxin (Archaeoglobus fulgidus (strain ATCC 49558 / DSM 4304 / JCM 9628 / NBRC 100126 / VC-16)).